Consider the following 546-residue polypeptide: Sulfite oxidase, mitochondrial (546 aa).

A mitochondrion-targeting transit peptide spans 1-80; it reads MLPRLYRSVA…YHDHRCRASQ (80 aa). The 80-residue stretch at 83–162 folds into the Cytochrome b5 heme-binding domain; the sequence is PRIYSKEDVR…LAEYKIGELN (80 aa). H119 contributes to the heme b binding site. S124 carries the post-translational modification Phosphoserine. Heme b contacts are provided by H144, Q146, and H148. The tract at residues 166-175 is hinge; it reads RMSPPLEASD. Residues 176–402 form a moco domain region; it reads PYSNDPMRHP…YSHWQRRDYK (227 aa). Residues 216–220, C265, D323, H362, R367, and 378–380 contribute to the Mo-molybdopterin site; these read FTRNH and HVK. The homodimerization stretch occupies residues 403 to 539; sequence GFSPSVDWDT…RGVLSNAWHR (137 aa).

Homodimer. It depends on heme b as a cofactor. Requires Mo-molybdopterin as cofactor.

The protein localises to the mitochondrion intermembrane space. The catalysed reaction is sulfite + O2 + H2O = sulfate + H2O2. The protein operates within energy metabolism; sulfur metabolism. In terms of biological role, catalyzes the oxidation of sulfite to sulfate, the terminal reaction in the oxidative degradation of sulfur-containing amino acids. The chain is Sulfite oxidase, mitochondrial from Rattus norvegicus (Rat).